The sequence spans 138 residues: Small ribosomal subunit protein bS6 (138 aa).

The segment covering 97–121 has biased composition (basic and acidic residues); the sequence is TEQSEMLKAEENRSERRERRDRPDN. The tract at residues 97–138 is disordered; that stretch reads TEQSEMLKAEENRSERRERRDRPDNTDGSNENDSDSDNNADE. The segment covering 126–138 has biased composition (acidic residues); sequence NENDSDSDNNADE.

This sequence belongs to the bacterial ribosomal protein bS6 family.

Functionally, binds together with bS18 to 16S ribosomal RNA. This is Small ribosomal subunit protein bS6 from Stutzerimonas stutzeri (strain A1501) (Pseudomonas stutzeri).